Reading from the N-terminus, the 96-residue chain is Large ribosomal subunit protein bL27 (96 aa).

A propeptide spanning residues 1 to 9 is cleaved from the precursor; sequence MLRLDLQFF. Residues 14–35 form a disordered region; that stretch reads GVGSTKNGRDSQSKRLGAKRAD.

Belongs to the bacterial ribosomal protein bL27 family. Post-translationally, the N-terminus is cleaved by ribosomal processing cysteine protease Prp.

This chain is Large ribosomal subunit protein bL27, found in Bacillus cytotoxicus (strain DSM 22905 / CIP 110041 / 391-98 / NVH 391-98).